The primary structure comprises 84 residues: Beta/gamma-crystallin (84 aa).

Beta/gamma crystallin 'Greek key' domains follow at residues 2-42 (GKII…IVES) and 43-84 (GTWF…VKQQ). The segment at 64-84 (KYPNPGSWGGNDDELSSVKQQ) is disordered.

The protein belongs to the beta/gamma-crystallin family. Monomer. In terms of tissue distribution, palps of larvae and otolith of the light-sensing ocellus.

Structural component of the neuroectodermal visual system. In Ciona intestinalis (Transparent sea squirt), this protein is Beta/gamma-crystallin.